Reading from the N-terminus, the 515-residue chain is Anterior pharynx in excess protein 1 (515 aa).

A signal peptide spans 1–26 (MTNFSSLLTTIFLCIISSATGSGTIE). The Extracellular segment spans residues 27-392 (LLISSPQTVL…QASDELQLRL (366 aa)). An N-linked (GlcNAc...) asparagine glycan is attached at N123. A DSL domain is found at 130 to 172 (NLCSSNYHGKRCNRYCIANAKLHWECSTHGVRRCSAGWSGEDC). 14 cysteine pairs are disulfide-bonded: C132–C141, C145–C155, C163–C172, C177–C187, C181–C193, C195–C204, C213–C218, C228–C237, C244–C256, C250–C268, C270–C279, C288–C300, C294–C310, and C312–C321. 4 EGF-like domains span residues 173–205 (SNPICAGGCSNRGRCVAPNQCSCADGFNGTRCE), 203–238 (RCEQCLPRAGCVNGDCVNETPNTCKCRDGFIGDRCD), 240–280 (DIKI…SQCK), and 284–322 (SKVRCSAEHVCKNGGACISMDDTNIQCKCRRGFSGKFCE). N-linked (GlcNAc...) asparagine glycosylation occurs at N200. The region spanning 325-349 (NHGDCSAMRCSAGETCQISGDFAIC) is the EGF-like 5; incomplete domain. The helical transmembrane segment at 393 to 413 (IAAICVLFSVCVIGLALVSFF) threads the bilayer. Residues 414-515 (FYMHSFSKWK…AADDESSFRV (102 aa)) are Cytoplasmic-facing. Disordered stretches follow at residues 427 to 452 (SQQAGGSTILPTTTSIPMSTTSSGTG) and 466 to 494 (RGNAPGSSSDSEPDHHCPPPHRHSPPPAY). The span at 431–452 (GGSTILPTTTSIPMSTTSSGTG) shows a compositional bias: low complexity.

Its subcellular location is the cell membrane. It localises to the nucleus. The protein resides in the cytoplasm. Its function is as follows. Probable ligand for lin-12/Notch and glp-1/Notch receptors and involved in the mediation of Notch signaling. Involved in the lin-12/Notch pathway signaling of cell fate in vulval precursor cells (VPCs), acting redundantly with dsl-1 and lag-2. Contributes to the establishment of the dorsal-ventral axis in early embryos. Involved in the specification of the blastomere cell ABp fate, probably acting as a signal from the P2 blastomere to the glp-1/Notch receptor on ABp and ABa. Probably acts as a signal, from the secondary vulval epithelial cells and the vulval muscle type 1 (vm1) cells, to activate the lin-12/Notch pathway in type 2 vulval muscle (vm2) cells, contributing to formation of the postsynaptic muscle plasma membrane extensions, known as muscle arms. Required for oocyte growth control, acting redundantly with lag-2, perhaps signaling via the glp-1/Notch pathway. Plays a somatic role in ovulation during adulthood, perhaps via lin-12/Notch signaling. Involved in establishing left-right asymmetry during intestinal organogenesis. The chain is Anterior pharynx in excess protein 1 (apx-1) from Caenorhabditis elegans.